The following is a 90-amino-acid chain: UPF0237 protein PAE3582 (90 aa).

In terms of domain architecture, ACT spans 5–74 (VVSVLGADRV…LEEEGKRLGV (70 aa)).

It belongs to the UPF0237 family.

This Pyrobaculum aerophilum (strain ATCC 51768 / DSM 7523 / JCM 9630 / CIP 104966 / NBRC 100827 / IM2) protein is UPF0237 protein PAE3582.